Reading from the N-terminus, the 49-residue chain is uncharacterized protein (49 aa).

The helical transmembrane segment at I5–F27 threads the bilayer.

Its subcellular location is the membrane. This is an uncharacterized protein from Saccharomyces cerevisiae (strain ATCC 204508 / S288c) (Baker's yeast).